The chain runs to 126 residues: Large ribosomal subunit protein bL20c (126 aa).

The protein belongs to the bacterial ribosomal protein bL20 family.

It is found in the plastid. Its subcellular location is the chloroplast. In terms of biological role, binds directly to 23S ribosomal RNA and is necessary for the in vitro assembly process of the 50S ribosomal subunit. It is not involved in the protein synthesizing functions of that subunit. This is Large ribosomal subunit protein bL20c from Illicium oligandrum (Star anise).